Here is a 433-residue protein sequence, read N- to C-terminus: Serine hydroxymethyltransferase (433 aa).

(6S)-5,6,7,8-tetrahydrofolate is bound by residues Leu-132 and Gly-136 to Leu-138. Lys-241 carries the N6-(pyridoxal phosphate)lysine modification.

It belongs to the SHMT family. In terms of assembly, homodimer. Requires pyridoxal 5'-phosphate as cofactor.

It localises to the cytoplasm. The catalysed reaction is (6R)-5,10-methylene-5,6,7,8-tetrahydrofolate + glycine + H2O = (6S)-5,6,7,8-tetrahydrofolate + L-serine. Its pathway is one-carbon metabolism; tetrahydrofolate interconversion. It participates in amino-acid biosynthesis; glycine biosynthesis; glycine from L-serine: step 1/1. In terms of biological role, catalyzes the reversible interconversion of serine and glycine with tetrahydrofolate (THF) serving as the one-carbon carrier. This reaction serves as the major source of one-carbon groups required for the biosynthesis of purines, thymidylate, methionine, and other important biomolecules. Also exhibits THF-independent aldolase activity toward beta-hydroxyamino acids, producing glycine and aldehydes, via a retro-aldol mechanism. The polypeptide is Serine hydroxymethyltransferase (Methylobacterium sp. (strain 4-46)).